A 352-amino-acid polypeptide reads, in one-letter code: Holliday junction branch migration complex subunit RuvB (352 aa).

Positions 4–185 (ADRLIAATGP…FGIVQRLEFY (182 aa)) are large ATPase domain (RuvB-L). Residues Ile24, Arg25, Gly66, Lys69, Thr70, Thr71, 132–134 (EDF), Arg175, Tyr185, and Arg222 each bind ATP. Residue Thr70 coordinates Mg(2+). The interval 186 to 256 (STADLATIVS…IADLALNLLD (71 aa)) is small ATPAse domain (RuvB-S). The segment at 259–352 (ERGFDHQDRR…VDEFLDAVDD (94 aa)) is head domain (RuvB-H). DNA-binding residues include Arg295, Arg314, and Arg319.

This sequence belongs to the RuvB family. As to quaternary structure, homohexamer. Forms an RuvA(8)-RuvB(12)-Holliday junction (HJ) complex. HJ DNA is sandwiched between 2 RuvA tetramers; dsDNA enters through RuvA and exits via RuvB. An RuvB hexamer assembles on each DNA strand where it exits the tetramer. Each RuvB hexamer is contacted by two RuvA subunits (via domain III) on 2 adjacent RuvB subunits; this complex drives branch migration. In the full resolvosome a probable DNA-RuvA(4)-RuvB(12)-RuvC(2) complex forms which resolves the HJ.

It is found in the cytoplasm. It catalyses the reaction ATP + H2O = ADP + phosphate + H(+). Functionally, the RuvA-RuvB-RuvC complex processes Holliday junction (HJ) DNA during genetic recombination and DNA repair, while the RuvA-RuvB complex plays an important role in the rescue of blocked DNA replication forks via replication fork reversal (RFR). RuvA specifically binds to HJ cruciform DNA, conferring on it an open structure. The RuvB hexamer acts as an ATP-dependent pump, pulling dsDNA into and through the RuvAB complex. RuvB forms 2 homohexamers on either side of HJ DNA bound by 1 or 2 RuvA tetramers; 4 subunits per hexamer contact DNA at a time. Coordinated motions by a converter formed by DNA-disengaged RuvB subunits stimulates ATP hydrolysis and nucleotide exchange. Immobilization of the converter enables RuvB to convert the ATP-contained energy into a lever motion, pulling 2 nucleotides of DNA out of the RuvA tetramer per ATP hydrolyzed, thus driving DNA branch migration. The RuvB motors rotate together with the DNA substrate, which together with the progressing nucleotide cycle form the mechanistic basis for DNA recombination by continuous HJ branch migration. Branch migration allows RuvC to scan DNA until it finds its consensus sequence, where it cleaves and resolves cruciform DNA. The sequence is that of Holliday junction branch migration complex subunit RuvB from Pseudomonas fluorescens (strain ATCC BAA-477 / NRRL B-23932 / Pf-5).